The chain runs to 256 residues: Major prion protein (256 aa).

The N-terminal stretch at 1-24 (MVKSHIGSWILVLFVAMWSDVGLC) is a signal peptide. The tract at residues 25 to 233 (KKRPKPGGGW…ESQAYYQRGA (209 aa)) is interaction with GRB2, ERI3 and SYN1. The interval 28-110 (PKPGGGWNTG…QWNKPSKPKT (83 aa)) is disordered. 5 consecutive repeat copies span residues 54 to 62 (PQGGGGWGQ), 63 to 70 (PHGGGWGQ), 71 to 78 (PHGGGWGQ), 79 to 86 (PHGGGWGQ), and 87 to 95 (PHGGGGWGQ). A 5 X 8 AA tandem repeats of P-H-G-G-G-W-G-Q region spans residues 54–95 (PQGGGGWGQPHGGGWGQPHGGGWGQPHGGGWGQPHGGGGWGQ). Over residues 55 to 97 (QGGGGWGQPHGGGWGQPHGGGWGQPHGGGWGQPHGGGGWGQGG) the composition is skewed to gly residues. The Cu(2+) site is built by His-64, Gly-65, Gly-66, His-72, Gly-73, Gly-74, His-80, Gly-81, Gly-82, His-88, Gly-90, and Gly-91. A disulfide bond links Cys-182 and Cys-217. 2 N-linked (GlcNAc...) (complex) asparagine glycosylation sites follow: Asn-184 and Asn-200. Ala-233 carries the GPI-anchor amidated alanine lipid modification. Residues 234 to 256 (SVILFSSPPVILLISFLIFLIVG) constitute a propeptide, removed in mature form.

It belongs to the prion family. Monomer and homodimer. Has a tendency to aggregate into amyloid fibrils containing a cross-beta spine, formed by a steric zipper of superposed beta-strands. Soluble oligomers may represent an intermediate stage on the path to fibril formation. Copper binding may promote oligomerization. Interacts with GRB2, APP, ERI3/PRNPIP and SYN1. Mislocalized cytosolically exposed PrP interacts with MGRN1; this interaction alters MGRN1 subcellular location and causes lysosomal enlargement. Interacts with KIAA1191.

It is found in the cell membrane. Its subcellular location is the golgi apparatus. Its function is as follows. Its primary physiological function is unclear. Has cytoprotective activity against internal or environmental stresses. May play a role in neuronal development and synaptic plasticity. May be required for neuronal myelin sheath maintenance. May play a role in iron uptake and iron homeostasis. Soluble oligomers are toxic to cultured neuroblastoma cells and induce apoptosis (in vitro). Association with GPC1 (via its heparan sulfate chains) targets PRNP to lipid rafts. Also provides Cu(2+) or Zn(2+) for the ascorbate-mediated GPC1 deaminase degradation of its heparan sulfate side chains. The protein is Major prion protein (PRNP) of Ovis aries (Sheep).